The chain runs to 162 residues: Anaerobic nitrite reductase GLB1 (162 aa).

A Globin domain is found at 9–159; that stretch reads VFSEEKEALV…LVAAIKQEMK (151 aa). The Homodimerization signature appears at 42 to 46; the sequence is EIAPS. The heme b site is built by Lys66, His70, Arg100, Thr104, and His105. Positions 112–124 match the Homodimerization motif; sequence DGHFEVTRFALLE.

Belongs to the plant globin family. In terms of assembly, homodimer. Heme b is required as a cofactor. As to expression, seeds and roots.

It is found in the cytoplasm. The protein resides in the nucleus. It catalyses the reaction Fe(III)-heme b-[protein] + nitric oxide + H2O = Fe(II)-heme b-[protein] + nitrite + 2 H(+). Phytoglobin that reduces nitrite to nitric oxide (NO) under anoxic conditions (e.g. during flooding or in waterlogged soil). May not function as an oxygen storage or transport protein. Has an unusually high affinity for O(2) through an hexacoordinate heme iron because of a very low dissociation constant. This chain is Anaerobic nitrite reductase GLB1, found in Hordeum vulgare (Barley).